The sequence spans 336 residues: O-methyltransferase 2 (336 aa).

G170, D198, N221, F222, and K237 together coordinate S-adenosyl-L-methionine. H241 serves as the catalytic Proton acceptor.

Belongs to the class I-like SAM-binding methyltransferase superfamily. Cation-independent O-methyltransferase family. COMT subfamily.

The enzyme catalyses (3,5-dichloro-2,4,6-trihydroxyphenyl)hexan-1-one + S-adenosyl-L-methionine = 1-(3,5-dichloro-2,6-dihydroxy-4-methoxyphenyl)hexan-1-one + S-adenosyl-L-homocysteine + H(+). The protein is O-methyltransferase 2 (omt2) of Dictyostelium discoideum (Social amoeba).